The following is a 151-amino-acid chain: Deoxyuridine 5'-triphosphate nucleotidohydrolase (151 aa).

Substrate is bound by residues 70 to 72 (RSG), Asn-83, 87 to 89 (LID), and Met-97.

It belongs to the dUTPase family. Mg(2+) serves as cofactor.

It carries out the reaction dUTP + H2O = dUMP + diphosphate + H(+). It functions in the pathway pyrimidine metabolism; dUMP biosynthesis; dUMP from dCTP (dUTP route): step 2/2. This enzyme is involved in nucleotide metabolism: it produces dUMP, the immediate precursor of thymidine nucleotides and it decreases the intracellular concentration of dUTP so that uracil cannot be incorporated into DNA. This Hamiltonella defensa subsp. Acyrthosiphon pisum (strain 5AT) protein is Deoxyuridine 5'-triphosphate nucleotidohydrolase.